An 889-amino-acid polypeptide reads, in one-letter code: Translation initiation factor IF-2 (889 aa).

Residues 158 to 296 (LKEKQEKRRQ…KYKSDELQSQ (139 aa)) are disordered. Over residues 209-228 (AAATPATSTAPATTSTTAAT) the composition is skewed to low complexity. The span at 238–270 (VKPEEKGEKKKKPTKQDAWKDEPVKRREPKARG) shows a compositional bias: basic and acidic residues. Residues 391 to 560 (PRAPVVTVMG…LLQAEVLELK (170 aa)) enclose the tr-type G domain. The segment at 400 to 407 (GHVDHGKT) is G1. 400–407 (GHVDHGKT) serves as a coordination point for GTP. The G2 stretch occupies residues 425–429 (GITQH). Residues 446–449 (DTPG) form a G3 region. Residues 446–450 (DTPGH) and 500–503 (NKMD) each bind GTP. The tract at residues 500–503 (NKMD) is G4. Residues 536 to 538 (SAK) are G5.

The protein belongs to the TRAFAC class translation factor GTPase superfamily. Classic translation factor GTPase family. IF-2 subfamily.

Its subcellular location is the cytoplasm. Its function is as follows. One of the essential components for the initiation of protein synthesis. Protects formylmethionyl-tRNA from spontaneous hydrolysis and promotes its binding to the 30S ribosomal subunits. Also involved in the hydrolysis of GTP during the formation of the 70S ribosomal complex. This chain is Translation initiation factor IF-2, found in Nitrosomonas europaea (strain ATCC 19718 / CIP 103999 / KCTC 2705 / NBRC 14298).